The chain runs to 298 residues: MIIHPNFDPVAIHLGPLAVRWYGLMYLVGFIAAIVVGRIRLKLPYVAAQGWTAKDIDDMMFYGVLGTVLGGRLGYVLFYKADFYFSHPLDVFKVWEGGMSFHGGFLGVTLAMMLFAWQRKRHWLQVTDFVAPMVPLGLAAGRLGNFINGELWGRVTDPTAPWAMLFPGAMRDDAAWLPKHPELVEKWHLADVFMQYQMLPRHPSQLYEIALEGIALFFVLFLFARKPRPMGAISALFLIGYGLARFTVEFAREPDDFLGLLALGLSMGQWLSLPMILAGIAMMIWAYRRRAANANAAA.

The next 7 membrane-spanning stretches (helical) occupy residues 17-37 (LAVR…IVVG), 59-79 (MMFY…VLFY), 97-117 (GGMS…LFAW), 129-149 (FVAP…FING), 204-224 (SQLY…FLFA), 230-250 (MGAI…TVEF), and 257-277 (FLGL…PMIL). R142 serves as a coordination point for a 1,2-diacyl-sn-glycero-3-phospho-(1'-sn-glycerol).

The protein belongs to the Lgt family.

It localises to the cell inner membrane. The catalysed reaction is L-cysteinyl-[prolipoprotein] + a 1,2-diacyl-sn-glycero-3-phospho-(1'-sn-glycerol) = an S-1,2-diacyl-sn-glyceryl-L-cysteinyl-[prolipoprotein] + sn-glycerol 1-phosphate + H(+). It participates in protein modification; lipoprotein biosynthesis (diacylglyceryl transfer). In terms of biological role, catalyzes the transfer of the diacylglyceryl group from phosphatidylglycerol to the sulfhydryl group of the N-terminal cysteine of a prolipoprotein, the first step in the formation of mature lipoproteins. This is Phosphatidylglycerol--prolipoprotein diacylglyceryl transferase from Burkholderia orbicola (strain MC0-3).